The chain runs to 280 residues: Keratin, type I cytoskeletal 47 kDa (280 aa).

Positions 1–81 are head; it reads MSFRSSSSYS…SSSFSSFGGN (81 aa). The coil 1A stretch occupies residues 82–117; sequence DKQTMQNLNDRLASYLEKVRALEAANADLELKIREW. The IF rod domain occupies 82 to 280; the sequence is DKQTMQNLND…RDAELWFNQK (199 aa). The interval 118–139 is linker 1; sequence YEKQKGSGIGAASKDFSKYFEI. Residues 140–231 are coil 1B; the sequence is ISDLRNKILF…KNHEEEMSIA (92 aa). The tract at residues 232 to 254 is linker 12; that stretch reads KGSAAGQVTVEMDAAPGVDLNKI. The tract at residues 255–280 is coil 2; it reads LSDMRADYETLAEKNRRDAELWFNQK.

It belongs to the intermediate filament family. As to quaternary structure, heterotetramer of two type I and two type II keratins.

This chain is Keratin, type I cytoskeletal 47 kDa (xk81b1), found in Xenopus laevis (African clawed frog).